An 82-amino-acid chain; its full sequence is Putative membrane protein insertion efficiency factor (82 aa).

Belongs to the UPF0161 family.

The protein resides in the cell membrane. Its function is as follows. Could be involved in insertion of integral membrane proteins into the membrane. This chain is Putative membrane protein insertion efficiency factor, found in Streptococcus uberis (strain ATCC BAA-854 / 0140J).